The sequence spans 411 residues: Diaminobutyrate--2-oxoglutarate transaminase (411 aa).

N6-(pyridoxal phosphate)lysine is present on Lys-262.

Belongs to the class-III pyridoxal-phosphate-dependent aminotransferase family. Pyridoxal 5'-phosphate is required as a cofactor.

It catalyses the reaction L-2,4-diaminobutanoate + 2-oxoglutarate = L-aspartate 4-semialdehyde + L-glutamate. It participates in amine and polyamine biosynthesis; ectoine biosynthesis; L-ectoine from L-aspartate 4-semialdehyde: step 1/3. Functionally, catalyzes reversively the conversion of L-aspartate beta-semialdehyde (ASA) to L-2,4-diaminobutyrate (DABA) by transamination with L-glutamate. The polypeptide is Diaminobutyrate--2-oxoglutarate transaminase (ectB) (Vibrio cholerae serotype O1 (strain ATCC 39315 / El Tor Inaba N16961)).